A 130-amino-acid polypeptide reads, in one-letter code: Large ribosomal subunit protein bL19 (130 aa).

This sequence belongs to the bacterial ribosomal protein bL19 family.

This protein is located at the 30S-50S ribosomal subunit interface and may play a role in the structure and function of the aminoacyl-tRNA binding site. This Parvibaculum lavamentivorans (strain DS-1 / DSM 13023 / NCIMB 13966) protein is Large ribosomal subunit protein bL19.